The chain runs to 47 residues: Large ribosomal subunit protein bL33C (47 aa).

It belongs to the bacterial ribosomal protein bL33 family.

In Staphylococcus aureus (strain MRSA252), this protein is Large ribosomal subunit protein bL33C.